We begin with the raw amino-acid sequence, 149 residues long: UPF0178 protein Mmwyl1_2258 (149 aa).

This sequence belongs to the UPF0178 family.

This Marinomonas sp. (strain MWYL1) protein is UPF0178 protein Mmwyl1_2258.